Consider the following 425-residue polypeptide: Bifunctional phosphoribosylaminoimidazole carboxylase/phosphoribosylaminoimidazole succinocarboxamide synthetase (425 aa).

Ala-2 is modified (N-acetylalanine). The interval 2 to 260 (ATAEVLNIGK…WVAERVELLL (259 aa)) is SAICAR synthetase domain. Tyr-22 is modified (phosphotyrosine). At Ser-27 the chain carries Phosphoserine. Lys-36 is subject to N6-acetyllysine. A Phosphoserine modification is found at Ser-107. At Thr-238 the chain carries Phosphothreonine. Lys-247 bears the N6-acetyllysine mark. The segment at 261 to 266 (KSESQC) is linker. The interval 267 to 425 (RVVVLMGSTS…ADKKIRECNL (159 aa)) is AIR carboxylase domain. A Phosphoserine modification is found at Ser-274. Ser-332 contributes to the CO2 binding site.

The protein in the N-terminal section; belongs to the SAICAR synthetase family. It in the C-terminal section; belongs to the AIR carboxylase family. Class II subfamily. As to quaternary structure, homooctamer.

It catalyses the reaction 5-amino-1-(5-phospho-D-ribosyl)imidazole-4-carboxylate + L-aspartate + ATP = (2S)-2-[5-amino-1-(5-phospho-beta-D-ribosyl)imidazole-4-carboxamido]succinate + ADP + phosphate + 2 H(+). The enzyme catalyses 5-amino-1-(5-phospho-D-ribosyl)imidazole-4-carboxylate + H(+) = 5-amino-1-(5-phospho-beta-D-ribosyl)imidazole + CO2. Its pathway is purine metabolism; IMP biosynthesis via de novo pathway; 5-amino-1-(5-phospho-D-ribosyl)imidazole-4-carboxamide from 5-amino-1-(5-phospho-D-ribosyl)imidazole-4-carboxylate: step 1/2. It participates in purine metabolism; IMP biosynthesis via de novo pathway; 5-amino-1-(5-phospho-D-ribosyl)imidazole-4-carboxylate from 5-amino-1-(5-phospho-D-ribosyl)imidazole (carboxylase route): step 1/1. Bifunctional phosphoribosylaminoimidazole carboxylase and phosphoribosylaminoimidazole succinocarboxamide synthetase catalyzing two reactions of the de novo purine biosynthetic pathway. The polypeptide is Bifunctional phosphoribosylaminoimidazole carboxylase/phosphoribosylaminoimidazole succinocarboxamide synthetase (Homo sapiens (Human)).